A 57-amino-acid chain; its full sequence is MQLLYDLTKMNYSALYGEGRYLRIPAPIHYADKFVKALGKNWKIDEELLKHGFLYFI.

Possibly the antitoxin component of a type II toxin-antitoxin (TA) system. Its cognate toxin is VapC4 (Potential). The polypeptide is Putative antitoxin VapB4 (vapB4) (Methanocaldococcus jannaschii (strain ATCC 43067 / DSM 2661 / JAL-1 / JCM 10045 / NBRC 100440) (Methanococcus jannaschii)).